Here is a 77-residue protein sequence, read N- to C-terminus: MNLRLCVQALLLLWLSLTAVCGVPLMLPPDGTGLEEGSMRYLVKPRTSRTGPGAWQGGRRKFRRQRPRLSHKGPMPF.

An N-terminal signal peptide occupies residues 1–22; sequence MNLRLCVQALLLLWLSLTAVCG. A propeptide spanning residues 23 to 41 is cleaved from the precursor; sequence VPLMLPPDGTGLEEGSMRY. A disordered region spans residues 46–77; the sequence is RTSRTGPGAWQGGRRKFRRQRPRLSHKGPMPF. Residues 58-71 show a composition bias toward basic residues; sequence GRRKFRRQRPRLSH.

It belongs to the apelin family. Several active peptides may be produced by proteolytic processing of the peptide precursor. As to expression, expressed in extraembryonic visceral endoderm and in the primitive streak at 6.5 and 7.5 dpc. Expressed in the anterior visceral yolk sac at 8.25 dpc. Expressed weakly in the embryonic heart at 11.5 dpc. Expressed in the adult heart. Expressed in endothelial cells and cardiomyocytes and weakly expressed in fibroblasts.

The protein localises to the secreted. It is found in the extracellular space. Functionally, peptide hormone that functions as endogenous ligand for the G-protein-coupled apelin receptor (APLNR/APJ). Functions as a balanced agonist activating both G(i) protein pathway and beta-arrestin pathway of APLNR. Downstream G proteins activation, apelin can inhibit cAMP production and activate key intracellular effectors such as ERKs. On the other hand, APLNR activation induces beta-arrestin recruitment to the membrane leading to desensitization and internalization of the receptor. Apelin also blunts mechanical stretch-induced hypertrophic induction from APLNR. Apelin-36 dissociates more hardly than (pyroglu)apelin-13 from APLNR. Involved in the regulation of cardiac precursor cell movements during gastrulation and heart morphogenesis. Has an inhibitory effect on cytokine production in response to T-cell receptor/CD3 cross-linking; the oral intake of apelin in the colostrum and the milk might therefore modulate immune responses in neonates. Plays a role in early coronary blood vessels formation. Mediates myocardial contractility in an ERK1/2-dependent manner. May also have a role in the central control of body fluid homeostasis by influencing vasopressin release and drinking behavior. The chain is Apelin from Mus musculus (Mouse).